The following is a 144-amino-acid chain: Large ribosomal subunit protein uL16 (144 aa).

It belongs to the universal ribosomal protein uL16 family. As to quaternary structure, part of the 50S ribosomal subunit.

In terms of biological role, binds 23S rRNA and is also seen to make contacts with the A and possibly P site tRNAs. The polypeptide is Large ribosomal subunit protein uL16 (Listeria innocua serovar 6a (strain ATCC BAA-680 / CLIP 11262)).